We begin with the raw amino-acid sequence, 462 residues long: Argininosuccinate lyase (462 aa).

The protein belongs to the lyase 1 family. Argininosuccinate lyase subfamily.

Its subcellular location is the cytoplasm. It carries out the reaction 2-(N(omega)-L-arginino)succinate = fumarate + L-arginine. It participates in amino-acid biosynthesis; L-arginine biosynthesis; L-arginine from L-ornithine and carbamoyl phosphate: step 3/3. This is Argininosuccinate lyase from Streptococcus agalactiae serotype V (strain ATCC BAA-611 / 2603 V/R).